We begin with the raw amino-acid sequence, 365 residues long: Chorismate synthase (365 aa).

Arg46 is an NADP(+) binding site. FMN is bound by residues 123-125, 241-242, Gly281, 296-300, and Arg322; these read RSS, NG, and KPTPS.

This sequence belongs to the chorismate synthase family. As to quaternary structure, homotetramer. The cofactor is FMNH2.

It carries out the reaction 5-O-(1-carboxyvinyl)-3-phosphoshikimate = chorismate + phosphate. The protein operates within metabolic intermediate biosynthesis; chorismate biosynthesis; chorismate from D-erythrose 4-phosphate and phosphoenolpyruvate: step 7/7. Catalyzes the anti-1,4-elimination of the C-3 phosphate and the C-6 proR hydrogen from 5-enolpyruvylshikimate-3-phosphate (EPSP) to yield chorismate, which is the branch point compound that serves as the starting substrate for the three terminal pathways of aromatic amino acid biosynthesis. This reaction introduces a second double bond into the aromatic ring system. This chain is Chorismate synthase, found in Helicobacter pylori (strain Shi470).